The primary structure comprises 278 residues: Troponin T, slow skeletal muscle (278 aa).

Residues 1 to 37 (MSDTEEQEYEEEQPEEEAAEEEEEAPEEPEPVAEPEE) are compositionally biased toward acidic residues. 2 disordered regions span residues 1-63 (MSDT…RVDF) and 105-153 (RRRS…KKKV). Position 2 is a phosphoserine; by CK2 (Ser-2). Over residues 43–55 (SRPVVPPLIPPKI) the composition is skewed to pro residues. Basic and acidic residues predominate over residues 105 to 149 (RRRSERAEQQRFRTEKERERQAKLAEEKMRKEEEEAKKRAEDDAK).

Belongs to the troponin T family. Interacts with TPM3.

Troponin T is the tropomyosin-binding subunit of troponin, the thin filament regulatory complex which confers calcium-sensitivity to striated muscle actomyosin ATPase activity. The chain is Troponin T, slow skeletal muscle (TNNT1) from Homo sapiens (Human).